A 429-amino-acid chain; its full sequence is Ribosomal RNA small subunit methyltransferase B (429 aa).

Residues 254–260, aspartate 277, aspartate 303, and aspartate 322 contribute to the S-adenosyl-L-methionine site; that span reads CAAPGGK. The Nucleophile role is filled by cysteine 375.

It belongs to the class I-like SAM-binding methyltransferase superfamily. RsmB/NOP family.

The protein localises to the cytoplasm. It carries out the reaction cytidine(967) in 16S rRNA + S-adenosyl-L-methionine = 5-methylcytidine(967) in 16S rRNA + S-adenosyl-L-homocysteine + H(+). In terms of biological role, specifically methylates the cytosine at position 967 (m5C967) of 16S rRNA. The polypeptide is Ribosomal RNA small subunit methyltransferase B (Escherichia coli O6:H1 (strain CFT073 / ATCC 700928 / UPEC)).